The chain runs to 429 residues: Glutamyl-tRNA reductase (429 aa).

Residues 56–59 (TCNR), serine 119, 124–126 (EPQ), and glutamine 130 contribute to the substrate site. Cysteine 57 serves as the catalytic Nucleophile. Residue 199–204 (GAGEMI) participates in NADP(+) binding.

The protein belongs to the glutamyl-tRNA reductase family. In terms of assembly, homodimer.

The catalysed reaction is (S)-4-amino-5-oxopentanoate + tRNA(Glu) + NADP(+) = L-glutamyl-tRNA(Glu) + NADPH + H(+). Its pathway is porphyrin-containing compound metabolism; protoporphyrin-IX biosynthesis; 5-aminolevulinate from L-glutamyl-tRNA(Glu): step 1/2. Catalyzes the NADPH-dependent reduction of glutamyl-tRNA(Glu) to glutamate 1-semialdehyde (GSA). This chain is Glutamyl-tRNA reductase, found in Janthinobacterium sp. (strain Marseille) (Minibacterium massiliensis).